Here is a 204-residue protein sequence, read N- to C-terminus: FMN-dependent NADH:quinone oxidoreductase (204 aa).

FMN-binding positions include S9 and 15–17 (SAS).

This sequence belongs to the azoreductase type 1 family. Homodimer. The cofactor is FMN.

The catalysed reaction is 2 a quinone + NADH + H(+) = 2 a 1,4-benzosemiquinone + NAD(+). It carries out the reaction N,N-dimethyl-1,4-phenylenediamine + anthranilate + 2 NAD(+) = 2-(4-dimethylaminophenyl)diazenylbenzoate + 2 NADH + 2 H(+). Its function is as follows. Quinone reductase that provides resistance to thiol-specific stress caused by electrophilic quinones. In terms of biological role, also exhibits azoreductase activity. Catalyzes the reductive cleavage of the azo bond in aromatic azo compounds to the corresponding amines. This chain is FMN-dependent NADH:quinone oxidoreductase, found in Xanthomonas campestris pv. campestris (strain ATCC 33913 / DSM 3586 / NCPPB 528 / LMG 568 / P 25).